We begin with the raw amino-acid sequence, 257 residues long: Anamorsin homolog (257 aa).

The interval 1–132 (MSVLALDVAR…ARGTAFALKS (132 aa)) is N-terminal SAM-like domain. Residues 133 to 171 (RAVRVNATAADAADAWGASAAADDDELIDESALLTELDV) are linker. Cys-181, Cys-190, Cys-193, and Cys-195 together coordinate [2Fe-2S] cluster. Residues 181–195 (CDVGAGKKACKNCTC) form a fe-S binding site A region. Residues Cys-219, Cys-222, Cys-230, and Cys-233 each contribute to the [4Fe-4S] cluster site. Short sequence motifs (cx2C motif) lie at residues 219-222 (CGNC) and 230-233 (CAGC). The segment at 219-233 (CGNCALGDAFRCAGC) is fe-S binding site B.

This sequence belongs to the anamorsin family. As to quaternary structure, monomer. The cofactor is [2Fe-2S] cluster. [4Fe-4S] cluster is required as a cofactor.

It localises to the cytoplasm. The protein resides in the mitochondrion intermembrane space. Its function is as follows. Component of the cytosolic iron-sulfur (Fe-S) protein assembly (CIA) machinery. Required for the maturation of extramitochondrial Fe-S proteins. Part of an electron transfer chain functioning in an early step of cytosolic Fe-S biogenesis, facilitating the de novo assembly of a [4Fe-4S] cluster on the cytosolic Fe-S scaffold complex. Electrons are transferred from NADPH via a FAD- and FMN-containing diflavin oxidoreductase. Together with the diflavin oxidoreductase, also required for the assembly of the diferric tyrosyl radical cofactor of ribonucleotide reductase (RNR), probably by providing electrons for reduction during radical cofactor maturation in the catalytic small subunit. This chain is Anamorsin homolog, found in Ostreococcus lucimarinus (strain CCE9901).